Here is a 61-residue protein sequence, read N- to C-terminus: Large ribosomal subunit protein uL30 (61 aa).

This sequence belongs to the universal ribosomal protein uL30 family. In terms of assembly, part of the 50S ribosomal subunit.

The sequence is that of Large ribosomal subunit protein uL30 from Dichelobacter nodosus (strain VCS1703A).